A 255-amino-acid polypeptide reads, in one-letter code: Electron transfer flavoprotein subunit beta (255 aa).

The residue at position 2 (A2) is an N-acetylalanine. AMP contacts are provided by residues A9, 39–42 (NPFC), C66, and 123–134 (GKQAIDDDCNQT). Residues 183–205 (ADLRLNEPRYATLPNIMKAKKKK) are recognition loop. The residue at position 200 (K200) is an N6,N6,N6-trimethyllysine; by ETFBKMT; alternate. Position 200 is an N6-acetyllysine; alternate (K200). K200 carries the post-translational modification N6-methyllysine; alternate. The residue at position 203 (K203) is an N6,N6,N6-trimethyllysine; by ETFBKMT. N6-acetyllysine; alternate is present on K210. K210 carries the N6-succinyllysine; alternate modification. Residues S223 and S226 each carry the phosphoserine modification. At K238 the chain carries N6-acetyllysine. K248 carries the N6-acetyllysine; alternate modification. An N6-succinyllysine; alternate modification is found at K248.

Belongs to the ETF beta-subunit/FixA family. As to quaternary structure, heterodimer composed of ETFA and ETFB. Identified in a complex that contains ETFA, ETFB and ETFRF1. Interacts with ACADM. Post-translationally, methylated. Trimethylation at Lys-200 and Lys-203 may negatively regulate the activity in electron transfer from acyl-CoA dehydrogenases.

The protein localises to the mitochondrion matrix. Its function is as follows. Heterodimeric electron transfer flavoprotein that accepts electrons from several mitochondrial dehydrogenases, including acyl-CoA dehydrogenases, glutaryl-CoA and sarcosine dehydrogenase. It transfers the electrons to the main mitochondrial respiratory chain via ETF-ubiquinone oxidoreductase. Required for normal mitochondrial fatty acid oxidation and normal amino acid metabolism. ETFB binds an AMP molecule that probably has a purely structural role. This Mus musculus (Mouse) protein is Electron transfer flavoprotein subunit beta.